The chain runs to 250 residues: Manganese transport system ATP-binding protein MntB (250 aa).

The 232-residue stretch at 5-236 (VKVDNLSVFY…MVAKTYQGNL (232 aa)) folds into the ABC transporter domain. Position 37–44 (37–44 (GPNGAGKS)) interacts with ATP.

Belongs to the ABC transporter superfamily.

It is found in the cell membrane. In terms of biological role, this protein is probably a component of a manganese permease, a binding protein-dependent, ATP-driven transport system. Probably responsible for energy coupling to the transport system. This chain is Manganese transport system ATP-binding protein MntB (mntB), found in Halalkalibacterium halodurans (strain ATCC BAA-125 / DSM 18197 / FERM 7344 / JCM 9153 / C-125) (Bacillus halodurans).